A 486-amino-acid chain; its full sequence is uncharacterized protein (486 aa).

The chain crosses the membrane as a helical span at residues 18-38 (TLLQLFVFTVICVFVLSGLAI). The segment covering 62–79 (DRQKQMEKQQDSGEKRSF) has biased composition (basic and acidic residues). Disordered regions lie at residues 62 to 82 (DRQKQMEKQQDSGEKRSFEST) and 117 to 147 (IESSSSSDSSSSSSSSNAKNSQGGGQGGPQM). A compositionally biased stretch (low complexity) spans 119 to 132 (SSSSSDSSSSSSSS). The next 3 membrane-spanning stretches (helical) occupy residues 324 to 344 (VVYLVSVAGAVILGLIVMMSI), 365 to 385 (IGQFLTEILIVAVIAIGLASV), and 451 to 471 (MLILGGIGILIAIIATLLPSI).

Belongs to the ABC-4 integral membrane protein family.

It is found in the cell membrane. This is an uncharacterized protein from Bacillus subtilis (strain 168).